Consider the following 264-residue polypeptide: COP9 signalosome complex subunit 7b (264 aa).

Ala-2 carries the post-translational modification N-acetylalanine. One can recognise a PCI domain in the interval 2-159 (AGEQKPSSNL…QLLEVDFCIG (158 aa)). Residues 194 to 237 (RANQYKENHHRTQQQVEAEVSNIKKTLKATASSSAQEMEQQLAE) are a coiled coil. Residues 223–232 (TASSSAQEME) show a composition bias toward polar residues. A disordered region spans residues 223–264 (TASSSAQEMEQQLAERECPPHTEQRQPTKKMSKVKGLVSSRH). Residues 235-248 (LAERECPPHTEQRQ) show a composition bias toward basic and acidic residues.

It belongs to the CSN7/EIF3M family. CSN7 subfamily. In terms of assembly, component of the CSN complex, composed of COPS1/GPS1, COPS2, COPS3, COPS4, COPS5, COPS6, COPS7 (COPS7A or COPS7B) and COPS8 and COPS9. In the complex, it probably interacts directly with COPS1, COPS2, COPS4, COPS5, COPS6 and COPS8. Interacts with EIF3S6.

The protein resides in the cytoplasm. It localises to the nucleus. Functionally, component of the COP9 signalosome complex (CSN), a complex involved in various cellular and developmental processes. The CSN complex is an essential regulator of the ubiquitin (Ubl) conjugation pathway by mediating the deneddylation of the cullin subunits of SCF-type E3 ligase complexes, leading to decrease the Ubl ligase activity of SCF-type complexes such as SCF, CSA or DDB2. The complex is also involved in phosphorylation of p53/TP53, JUN, I-kappa-B-alpha/NFKBIA, ITPK1 and IRF8/ICSBP, possibly via its association with CK2 and PKD kinases. CSN-dependent phosphorylation of TP53 and JUN promotes and protects degradation by the Ubl system, respectively. In Mus musculus (Mouse), this protein is COP9 signalosome complex subunit 7b (Cops7b).